The chain runs to 121 residues: MASEETGVTAPGAQEVANAGVASEAKGKGKGPAQDTHDTEMDEDDEDDTEADEAEQVAEEVEDDGMDEIDSSNVLPSRTRGRKIDFAKAAAEQNLSVDDDEEDDDDDFNDPDAEDDKMDED.

The segment at 1 to 121 (MASEETGVTA…DAEDDKMDED (121 aa)) is disordered. Composition is skewed to acidic residues over residues 40–70 (EMDEDDEDDTEADEAEQVAEEVEDDGMDEID) and 97–121 (VDDDEEDDDDDFNDPDAEDDKMDED).

The protein belongs to the CHZ1 family. In terms of assembly, forms a heterotrimer with H2A.Z-H2B, stabilizing the association of the histone dimer. Also, with a lower affinity, forms a heterotrimer with H2A-H2B.

The protein localises to the nucleus. Functionally, forms a chaperone-bound H2A.Z-H2B complex that acts as a source for SWR1 complex-dependent H2A to H2A.Z histone replacement in chromatin. In Pyricularia oryzae (strain 70-15 / ATCC MYA-4617 / FGSC 8958) (Rice blast fungus), this protein is Histone H2A.Z-specific chaperone CHZ1 (CHZ1).